A 668-amino-acid chain; its full sequence is Tastin (668 aa).

Disordered stretches follow at residues 1 to 102 (MTTL…GGSN), 154 to 177 (ERKGGTTQRGQSARSSAYLAPRIP), and 189 to 285 (FSRL…GRHH). Ser-16 bears the Phosphoserine mark. Polar residues-rich tracts occupy residues 27-37 (QRCQDFSSVKS) and 55-64 (PRSTQRQRPL). Ser-97 carries the phosphoserine modification. The span at 158–168 (GTTQRGQSARS) shows a compositional bias: polar residues. Ser-169 is modified (phosphoserine). Composition is skewed to basic and acidic residues over residues 227–246 (ELRRETCGGGRDGDCTDRRT) and 269–282 (GEQEAVPHSDDGGG). 3 positions are modified to phosphoserine: Ser-306, Ser-324, and Ser-338. Disordered regions lie at residues 364 to 392 (ITLQKEPRKPSVASTSGPRPKRTPSHQEL) and 462 to 502 (TEPL…AEPE).

In terms of assembly, directly binds bystin, and indirectly trophinin.

The protein resides in the cytoplasm. Its function is as follows. Could be involved with bystin and trophinin in a cell adhesion molecule complex that mediates an initial attachment of the blastocyst to uterine epithelial cells at the time of the embryo implantation. The polypeptide is Tastin (Mus musculus (Mouse)).